Reading from the N-terminus, the 352-residue chain is Chalcone synthase C (352 aa).

C170 is an active-site residue.

It belongs to the thiolase-like superfamily. Chalcone/stilbene synthases family.

It carries out the reaction (E)-4-coumaroyl-CoA + 3 malonyl-CoA + 3 H(+) = 2',4,4',6'-tetrahydroxychalcone + 3 CO2 + 4 CoA. Its pathway is secondary metabolite biosynthesis; flavonoid biosynthesis. In terms of biological role, the primary product of this enzyme is 4,2',4',6'-tetrahydroxychalcone (also termed naringenin-chalcone or chalcone) which can under specific conditions spontaneously isomerize into naringenin. In Ipomoea purpurea (Common morning glory), this protein is Chalcone synthase C (CHSC).